Consider the following 390-residue polypeptide: MGRGARVPSEAPGAGVERRWLGAALVALCLLPALVLLARLGAPAVPAWSAAQGDVAALGLSAVPPTRVPGPLAPRRRRYTLTPARLRWDHFNLTYRILSFPRNLLSPRETRRALAAAFRMWSDVSPFSFREVAPEQPSDLRIGFYPINHTDCLVSALHHCFDGPTGELAHAFFPPHGGIHFDDSEYWVLGPTRYSWKKGVWLTDLVHVAAHEIGHALGLMHSQHGRALMHLNATLRGWKALSQDELWGLHRLYGCLDRLFVCASWARRGFCDARRRLMKRLCPSSCDFCYEFPFPTVATTPPPPRTKTRLVPEGRNVTFRCGQKILHKKGKVYWYKDQEPLEFSYPGYLALGEAHLSIIANAVNEGTYTCVVRRQQRVLTTYSWRVRVRG.

The Cytoplasmic segment spans residues 1–19 (MGRGARVPSEAPGAGVERR). Residues 1–78 (MGRGARVPSE…PGPLAPRRRR (78 aa)) constitute a propeptide that is removed on maturation. The chain crosses the membrane as a helical; Signal-anchor for type II membrane protein span at residues 20-40 (WLGAALVALCLLPALVLLARL). Residues 41–390 (GAPAVPAWSA…TYSWRVRVRG (350 aa)) are Lumenal-facing. Residues N92 and N148 are each glycosylated (N-linked (GlcNAc...) asparagine). H211 is a binding site for Zn(2+). E212 is a catalytic residue. H215 and H221 together coordinate Zn(2+). Residue N232 is glycosylated (N-linked (GlcNAc...) asparagine). The ShKT domain maps to 255-289 (CLDRLFVCASWARRGFCDARRRLMKRLCPSSCDFC). Cystine bridges form between C255–C289, C262–C282, and C271–C286. Positions 295 to 380 (PTVATTPPPP…VVRRQQRVLT (86 aa)) constitute an Ig-like C2-type domain. N316 carries N-linked (GlcNAc...) asparagine glycosylation. A disulfide bridge connects residues C321 and C370.

The protein belongs to the peptidase M10A family. It depends on Zn(2+) as a cofactor. Post-translationally, N-glycosylated. Proteolytic cleavage might yield an active form. As to expression, predominantly expressed in ovary, testis and prostate.

The protein localises to the endoplasmic reticulum membrane. It is found in the membrane. Its activity is regulated as follows. Inhibited by TIMP2. In terms of biological role, protease. May regulate the surface expression of some potassium channels by retaining them in the endoplasmic reticulum. The chain is Matrix metalloproteinase-23 (MMP23B) from Homo sapiens (Human).